The primary structure comprises 645 residues: E3 ubiquitin-protein ligase ORTHRUS 2 (645 aa).

The PHD-type zinc finger occupies 12–63 (DGVCMRCKSNPPPEESLTCGTCVTPWHVSCLSSPPKTLASTLQWHCPDCSGE). The disordered stretch occupies residues 96–133 (LSTEEKAKMRQRLLSGKGVEEDDEEEKRKKKGKGKNPN). An RING-type 1 zinc finger spans residues 146 to 185 (CSFCMQLPERPVTKPCGHNACLKCFEKWMGQGKRTCGKCR). The region spanning 273-422 (VRNQGLLVGE…FKVCRYLFVR (150 aa)) is the YDG domain. An RING-type 2 zinc finger spans residues 518-575 (CQICQQVLTLPVTTPCAHNFCKACLEAKFAGKTLVRERSTGGRTLRSRKNVLNCPCCP). A coiled-coil region spans residues 583–613 (QNPQVNREVAEVIEKLKTQEEDTAELEDEDE). Positions 599–645 (KTQEEDTAELEDEDEGECSGTTPEEDSEQPKKRIKLDTDATVSATIR) are disordered. Residues 603–625 (EDTAELEDEDEGECSGTTPEEDS) show a composition bias toward acidic residues. Residues 626-636 (EQPKKRIKLDT) are compositionally biased toward basic and acidic residues.

Interacts with histones CENH3, HTB2, HTR3 and H4. As to expression, mostly expressed in inflorescence and, to a lower extent, in leaves.

It localises to the nucleus. It catalyses the reaction S-ubiquitinyl-[E2 ubiquitin-conjugating enzyme]-L-cysteine + [acceptor protein]-L-lysine = [E2 ubiquitin-conjugating enzyme]-L-cysteine + N(6)-ubiquitinyl-[acceptor protein]-L-lysine.. It functions in the pathway protein modification; protein ubiquitination. In terms of biological role, E3 ubiquitin-protein ligase. Participates in CpG methylation-dependent transcriptional regulation and epigenetic transcriptional silencing. Mediates ubiquitination with the E2 ubiquitin-conjugating enzyme UBC11. Promotes methylation-mediated gene silencing leading, for example, to early flowering. Associates with methylated DNA, and can bind to CpG, CpNpG, and CpNpN DNA motifs, with a strong preference for methylated forms, and with highest affinity for CpG substrate. Probably acts at the DNA methylation?histone interface to maintain centromeric heterochromatin. This chain is E3 ubiquitin-protein ligase ORTHRUS 2 (ORTH2), found in Arabidopsis thaliana (Mouse-ear cress).